The sequence spans 126 residues: 3-aminoacrylate deaminase RutC (126 aa).

It belongs to the RutC family.

It carries out the reaction (Z)-3-aminoacrylate + H2O + H(+) = 3-oxopropanoate + NH4(+). In terms of biological role, involved in pyrimidine catabolism. Catalyzes the deamination of 3-aminoacrylate to malonic semialdehyde, a reaction that can also occur spontaneously. RutC may facilitate the reaction and modulate the metabolic fitness, rather than catalyzing essential functions. The polypeptide is 3-aminoacrylate deaminase RutC (Acinetobacter baylyi (strain ATCC 33305 / BD413 / ADP1)).